The sequence spans 164 residues: Lipoprotein signal peptidase (164 aa).

3 helical membrane passes run 12–32 (WLWL…LILQ), 70–90 (WFFA…MYRL), and 102–122 (ALII…GFVV). Catalysis depends on residues D123 and D141. The helical transmembrane segment at 137 to 157 (FNLADTAICVGAALIVLEGFL) threads the bilayer.

It belongs to the peptidase A8 family.

It localises to the cell inner membrane. It catalyses the reaction Release of signal peptides from bacterial membrane prolipoproteins. Hydrolyzes -Xaa-Yaa-Zaa-|-(S,diacylglyceryl)Cys-, in which Xaa is hydrophobic (preferably Leu), and Yaa (Ala or Ser) and Zaa (Gly or Ala) have small, neutral side chains.. The protein operates within protein modification; lipoprotein biosynthesis (signal peptide cleavage). This protein specifically catalyzes the removal of signal peptides from prolipoproteins. The polypeptide is Lipoprotein signal peptidase (Shigella boydii serotype 4 (strain Sb227)).